The sequence spans 62 residues: MPRMVRCSFCGREIEPGTGIMYVKNDGSILWFCSRKCYKNYLLLRRDPRKLKWTLKYGSQTK.

The Zn(2+) site is built by Cys7, Cys10, Cys33, and Cys37. The C4-type zinc-finger motif lies at 7–37; the sequence is CSFCGREIEPGTGIMYVKNDGSILWFCSRKC.

This sequence belongs to the eukaryotic ribosomal protein eL24 family. In terms of assembly, part of the 50S ribosomal subunit. Forms a cluster with proteins L3 and L14. Zn(2+) serves as cofactor.

Its function is as follows. Binds to the 23S rRNA. The sequence is that of Large ribosomal subunit protein eL24 from Staphylothermus marinus (strain ATCC 43588 / DSM 3639 / JCM 9404 / F1).